We begin with the raw amino-acid sequence, 328 residues long: Acetyl-coenzyme A carboxylase carboxyl transferase subunit alpha (328 aa).

Residues 42 to 296 (SFKEQLSILK…KESLISELHF (255 aa)) enclose the CoA carboxyltransferase C-terminal domain.

Belongs to the AccA family. Acetyl-CoA carboxylase is a heterohexamer composed of biotin carboxyl carrier protein (accB), biotin carboxylase (accC) and two subunits each of ACCase subunit alpha (accA) and ACCase subunit beta (accD).

The protein localises to the plastid. It localises to the chloroplast. It catalyses the reaction N(6)-carboxybiotinyl-L-lysyl-[protein] + acetyl-CoA = N(6)-biotinyl-L-lysyl-[protein] + malonyl-CoA. It functions in the pathway lipid metabolism; malonyl-CoA biosynthesis; malonyl-CoA from acetyl-CoA: step 1/1. In terms of biological role, component of the acetyl coenzyme A carboxylase (ACC) complex. First, biotin carboxylase catalyzes the carboxylation of biotin on its carrier protein (BCCP) and then the CO(2) group is transferred by the carboxyltransferase to acetyl-CoA to form malonyl-CoA. The polypeptide is Acetyl-coenzyme A carboxylase carboxyl transferase subunit alpha (Gracilaria tenuistipitata var. liui (Red alga)).